The sequence spans 243 residues: Adenosylcobinamide-GDP ribazoletransferase (243 aa).

7 consecutive transmembrane segments (helical) span residues W8–L28, P36–L56, V58–L78, A107–S127, K131–A151, F187–P207, and Y222–A242.

Belongs to the CobS family. It depends on Mg(2+) as a cofactor.

Its subcellular location is the cell inner membrane. It catalyses the reaction alpha-ribazole + adenosylcob(III)inamide-GDP = adenosylcob(III)alamin + GMP + H(+). The enzyme catalyses alpha-ribazole 5'-phosphate + adenosylcob(III)inamide-GDP = adenosylcob(III)alamin 5'-phosphate + GMP + H(+). It participates in cofactor biosynthesis; adenosylcobalamin biosynthesis; adenosylcobalamin from cob(II)yrinate a,c-diamide: step 7/7. Joins adenosylcobinamide-GDP and alpha-ribazole to generate adenosylcobalamin (Ado-cobalamin). Also synthesizes adenosylcobalamin 5'-phosphate from adenosylcobinamide-GDP and alpha-ribazole 5'-phosphate. This is Adenosylcobinamide-GDP ribazoletransferase from Thermosynechococcus vestitus (strain NIES-2133 / IAM M-273 / BP-1).